The sequence spans 247 residues: Synaptonemal complex central element protein 1-like (247 aa).

A coiled-coil region spans residues 71–196; that stretch reads SEELGEAQAL…LQEARETWDS (126 aa). The interval 189–247 is disordered; sequence EARETWDSPGNCGLKTELEELEGQSQRSPEAQNDKGEASQEEQHHLETSEELPRTGTLC. Residues 220-241 show a composition bias toward basic and acidic residues; the sequence is QNDKGEASQEEQHHLETSEELP.

Belongs to the SYCE family. In terms of tissue distribution, isoform 1 is abundantly expressed in testis and weakly in ovary, it is not found in other tissues. Isoform 2 is expressed in testis and poorly in brain, heart, lung and other examined tissues.

In terms of biological role, may be involved in meiosis. Isoform 1 may be involved in meiosis during spermatogenesis while isoform 2 is probably related to a later stage of meiosis, in the development stage of secondary spermatocytes and spermatids. In Mus musculus (Mouse), this protein is Synaptonemal complex central element protein 1-like (Syce1l).